The sequence spans 251 residues: Probable transcriptional regulatory protein MSMEG_2940/MSMEI_2866 (251 aa).

This sequence belongs to the TACO1 family.

The protein resides in the cytoplasm. The protein is Probable transcriptional regulatory protein MSMEG_2940/MSMEI_2866 of Mycolicibacterium smegmatis (strain ATCC 700084 / mc(2)155) (Mycobacterium smegmatis).